The sequence spans 248 residues: 4-hydroxy-tetrahydrodipicolinate reductase (248 aa).

Residue Asp28 coordinates NAD(+). Lys29 serves as a coordination point for NADP(+). Residues 78–80 (ATT) and 102–105 (SYNM) each bind NAD(+). Catalysis depends on His134, which acts as the Proton donor/acceptor. Residue His135 coordinates (S)-2,3,4,5-tetrahydrodipicolinate. Lys138 (proton donor) is an active-site residue. Residue 144–145 (GT) participates in (S)-2,3,4,5-tetrahydrodipicolinate binding.

This sequence belongs to the DapB family.

The protein localises to the cytoplasm. The enzyme catalyses (S)-2,3,4,5-tetrahydrodipicolinate + NAD(+) + H2O = (2S,4S)-4-hydroxy-2,3,4,5-tetrahydrodipicolinate + NADH + H(+). The catalysed reaction is (S)-2,3,4,5-tetrahydrodipicolinate + NADP(+) + H2O = (2S,4S)-4-hydroxy-2,3,4,5-tetrahydrodipicolinate + NADPH + H(+). The protein operates within amino-acid biosynthesis; L-lysine biosynthesis via DAP pathway; (S)-tetrahydrodipicolinate from L-aspartate: step 4/4. Catalyzes the conversion of 4-hydroxy-tetrahydrodipicolinate (HTPA) to tetrahydrodipicolinate. The protein is 4-hydroxy-tetrahydrodipicolinate reductase of Exiguobacterium sibiricum (strain DSM 17290 / CCUG 55495 / CIP 109462 / JCM 13490 / 255-15).